We begin with the raw amino-acid sequence, 235 residues long: Elongation factor Tu, chloroplastic (235 aa).

A tr-type G domain is found at 1–125 (KNMITGAAQM…KVDSYIPTPQ (125 aa)). 47–50 (NKED) contacts GTP.

The protein belongs to the TRAFAC class translation factor GTPase superfamily. Classic translation factor GTPase family. EF-Tu/EF-1A subfamily.

Its subcellular location is the plastid. The protein resides in the chloroplast. It catalyses the reaction GTP + H2O = GDP + phosphate + H(+). Functionally, GTP hydrolase that promotes the GTP-dependent binding of aminoacyl-tRNA to the A-site of ribosomes during protein biosynthesis. This is Elongation factor Tu, chloroplastic (tufA) from Gonium pectorale (Green alga).